A 943-amino-acid polypeptide reads, in one-letter code: Translation initiation factor IF-2 (943 aa).

The interval Ser30–Glu357 is disordered. 5 stretches are compositionally biased toward basic and acidic residues: residues Pro69–Ser82, Phe112–Asn137, Gln145–Asn155, Asp163–Ala196, and Arg224–Gln253. Residues Val254–Lys266 show a composition bias toward low complexity. Residues Lys296–Lys309 are compositionally biased toward basic and acidic residues. Low complexity predominate over residues Asn313–Lys332. In terms of domain architecture, tr-type G spans Glu445–Lys614. The G1 stretch occupies residues Gly454–Thr461. Gly454–Thr461 contributes to the GTP binding site. Residues Gly479–His483 are G2. The interval Asp500–Gly503 is G3. Residues Asp500–His504 and Asn554–Asp557 contribute to the GTP site. The segment at Asn554–Asp557 is G4. Residues Ser590–Lys592 are G5.

The protein belongs to the TRAFAC class translation factor GTPase superfamily. Classic translation factor GTPase family. IF-2 subfamily.

It localises to the cytoplasm. Functionally, one of the essential components for the initiation of protein synthesis. Protects formylmethionyl-tRNA from spontaneous hydrolysis and promotes its binding to the 30S ribosomal subunits. Also involved in the hydrolysis of GTP during the formation of the 70S ribosomal complex. The sequence is that of Translation initiation factor IF-2 from Streptococcus thermophilus (strain ATCC BAA-250 / LMG 18311).